A 365-amino-acid chain; its full sequence is Phenoloxidase-activating factor 1 (365 aa).

The N-terminal stretch at 1–23 (MKQVHFFILWFFVLNLYSIKAQA) is a signal peptide. Positions 24–74 (GCRTPNGENARCVPINNCKILYDSVLTSDPEVIRFLRASQCGYNGQPLVCC) constitute a Clip domain. 8 disulfide bridges follow: cysteine 25/cysteine 73, cysteine 35/cysteine 64, cysteine 41/cysteine 74, cysteine 101/cysteine 240, cysteine 140/cysteine 156, cysteine 184/cysteine 191, cysteine 284/cysteine 301, and cysteine 311/cysteine 340. Residues 110-364 (ILNGDDTVPE…YRDWIEGNIR (255 aa)) enclose the Peptidase S1 domain. A glycan (N-linked (GlcNAc...) asparagine) is linked at asparagine 131. The Charge relay system role is filled by histidine 155. Residues glutamate 175, asparagine 177, threonine 180, and aspartate 183 each contribute to the Ca(2+) site. The active-site Charge relay system is the aspartate 220. Residue serine 315 is the Charge relay system of the active site.

This sequence belongs to the peptidase S1 family. CLIP subfamily. As to quaternary structure, in the active form, heterodimer of a light chain and a heavy chain; disulfide-linked. Post-translationally, cleaved following the recognition of pathogen-derived products, probably by a lysyl endopeptidase.

Its subcellular location is the secreted. With respect to regulation, protein stability and endopeptidase activity are calcium dependent. First cleavage on prophenoloxidase PPO1 and PPO2 is not dependent on calcium; however, cleavage of PPO1 and PPO2 to their active forms is dependent on calcium and on the presence of PPAF2 and PPAF3. Cleavage of PPAF2 is inhibited by calcium. Inhibited by ethylenediaminetetraacetic acid (EDTA), p-nitrophenyl-p'-guanido-benzoate, diisopropylphosphorofluoridate (iPr2PF) and p-(Amidinophenyl)methanesulfonyl fluoride (p-APMSF). Serine endopeptidase which, by cleaving prophenoloxidase PPO1 and PPO2, is required for the activation of the prophenoloxidase cascade probably following the recognition of pathogen-derived products. The sequence is that of Phenoloxidase-activating factor 1 from Holotrichia diomphalia (Korean black chafer).